Here is a 381-residue protein sequence, read N- to C-terminus: N-acetylglucosamine-6-phosphate deacetylase (381 aa).

Residue glutamate 129 participates in a divalent metal cation binding. Residue valine 140 to histidine 141 coordinates substrate. Positions 193 and 214 each coordinate a divalent metal cation. Substrate is bound by residues asparagine 217 to alanine 218, arginine 226, and aspartate 246 to histidine 249. Aspartate 271 serves as the catalytic Proton donor/acceptor. Isoleucine 306–glycine 308 contributes to the substrate binding site.

Belongs to the metallo-dependent hydrolases superfamily. NagA family. In terms of assembly, homotetramer. The cofactor is a divalent metal cation.

The catalysed reaction is N-acetyl-D-glucosamine 6-phosphate + H2O = D-glucosamine 6-phosphate + acetate. It participates in amino-sugar metabolism; N-acetylneuraminate degradation; D-fructose 6-phosphate from N-acetylneuraminate: step 4/5. Involved in the first committed step in the biosynthesis of amino-sugar-nucleotides. Catalyzes the hydrolysis of the N-acetyl group of N-acetylglucosamine-6-phosphate (GlcNAc-6-P) to yield glucosamine 6-phosphate and acetate. In Haemophilus influenzae (strain ATCC 51907 / DSM 11121 / KW20 / Rd), this protein is N-acetylglucosamine-6-phosphate deacetylase (nagA).